We begin with the raw amino-acid sequence, 640 residues long: MPGTGLGRLAKRMTAAAAVFFISTSAVLPAQAATAPAAAPPGVPAALKAERAITTVDNGNLHTWWHDNGVFSPATPTQSSEVRRSSFYDVQVAQANQPQKLYDAFSYMSIPRSGKGKIGYTEEDGAEFSSDARLTMSWSSFEYAKDVWVEVSLRTGQTISSADQVQIRPSSYNFEKQLVDADTVRIKVPYSDAGYRFSVEFEPQLYTAYNDMSGDSGKLTTEAAGNRPIHTEPRNSMMVFAEPKLRGEQKERLVPTEESGSIHYPEPGEVRNLNSVSEEIIYFRPGTYSMGPDYHAVLPANVKWVYLAPGAYVKGAFRFLHDTQSQYKVTGYGVLSGEQYVYEADTNNSYHHLSGASNCHSSCVKMLQFASADAEQKLDLQGVTVAEPPYHSFVVYGNEQTFHMNVENYKQVGSWYWQTDGIELYKGSTMKNTFFNANDDVLKMYHSDVTIDNTVIWKNENGPVIQWGWTPRNIDNVNVANTTVIHNRMYWKDVKYNTCIFNSSSHWEDMGSTTKADPNTTVKNMRFENTAVEGMTNCAIRVYALSDTENIHIKNFNIGAWNGLEWTSQVSHLKRYTNSAGEKVTIGNEVPDGNGLALENYSVGGQVIEKTGGNSSDYQLGRLGFDGENWENWNAWKSAP.

A signal peptide spans 1–32 (MPGTGLGRLAKRMTAAAAVFFISTSAVLPAQA). A propeptide spanning residues 33–49 (ATAPAAAPPGVPAALKA) is cleaved from the precursor. Residues 248-269 (EQKERLVPTEESGSIHYPEPGE) are disordered.

Belongs to the glycosyl hydrolase 49 family.

The protein resides in the secreted. The catalysed reaction is Endohydrolysis of (1-&gt;6)-alpha-D-glucosidic linkages in dextran.. In terms of biological role, efficiently decomposes water-insoluble glucan as well as dextran. In Arthrobacter sp. (strain CB-8), this protein is Dextranase.